The sequence spans 611 residues: Actin-interacting protein 1 (611 aa).

WD repeat units follow at residues Glu57–Lys96, Gly145–Thr185, Glu188–Val227, Ala237–Thr276, Gly322–Val361, Pro446–Val485, Val489–His528, Phe534–Ile573, and His579–Pro610.

Belongs to the WD repeat AIP1 family.

The protein resides in the cytoplasm. It localises to the cytoskeleton. In terms of biological role, induces disassembly of actin filaments in conjunction with ADF/cofilin family proteins. Regulator of actin organization in myofibrils. The sequence is that of Actin-interacting protein 1 (unc-78) from Caenorhabditis elegans.